Consider the following 530-residue polypeptide: Tyrosinase (530 aa).

A signal peptide spans 1 to 18 (MLLAALCCLLWSFRTSTG). Topologically, residues 19-473 (HFPRACASSK…IKPYLEQASR (455 aa)) are lumenal, melanosome. Residues N86, N111, and N161 are each glycosylated (N-linked (GlcNAc...) asparagine). Residues H180, H202, and H211 each contribute to the Cu cation site. N-linked (GlcNAc...) asparagine glycosylation is found at N230 and N337. Cu cation-binding residues include H363 and H367. Residue N371 is glycosylated (N-linked (GlcNAc...) asparagine). Cu cation is bound at residue H390. The helical transmembrane segment at 474–494 (IWPWLIGAAVVGCVVTAVLGG) threads the bilayer. At 495–530 (LTSLLCRRNRKQLHEEKQPLLMEKEDYHSLLYQTHL) the chain is on the cytoplasmic side.

It belongs to the tyrosinase family. Forms an OPN3-dependent complex with DCT in response to blue light in melanocytes. The cofactor is Cu(2+). Post-translationally, glycosylated.

Its subcellular location is the melanosome membrane. It localises to the melanosome. It carries out the reaction 2 L-dopa + O2 = 2 L-dopaquinone + 2 H2O. It catalyses the reaction L-tyrosine + O2 = L-dopaquinone + H2O. The enzyme catalyses 2 5,6-dihydroxyindole-2-carboxylate + O2 = 2 indole-5,6-quinone-2-carboxylate + 2 H2O. Functionally, this is a copper-containing oxidase that functions in the formation of pigments such as melanins and other polyphenolic compounds. Catalyzes the initial and rate limiting step in the cascade of reactions leading to melanin production from tyrosine. In addition to hydroxylating tyrosine to DOPA (3,4-dihydroxyphenylalanine), also catalyzes the oxidation of DOPA to DOPA-quinone, and possibly the oxidation of DHI (5,6-dihydroxyindole) to indole-5,6 quinone. The sequence is that of Tyrosinase (TYR) from Canis lupus familiaris (Dog).